Here is a 110-residue protein sequence, read N- to C-terminus: Iron-sulfur cluster assembly protein CyaY (110 aa).

Belongs to the frataxin family.

Functionally, involved in iron-sulfur (Fe-S) cluster assembly. May act as a regulator of Fe-S biogenesis. The protein is Iron-sulfur cluster assembly protein CyaY of Ectopseudomonas mendocina (strain ymp) (Pseudomonas mendocina).